We begin with the raw amino-acid sequence, 279 residues long: Proteasome subunit beta (279 aa).

The propeptide at 1–53 (MSGTAEFPGRIPAPYLEVGSSSFVELLGSVAPELLPGRRPLPPGDMGDAAPHG) is removed in mature form; by autocatalysis. Thr54 serves as the catalytic Nucleophile.

It belongs to the peptidase T1B family. In terms of assembly, the 20S proteasome core is composed of 14 alpha and 14 beta subunits that assemble into four stacked heptameric rings, resulting in a barrel-shaped structure. The two inner rings, each composed of seven catalytic beta subunits, are sandwiched by two outer rings, each composed of seven alpha subunits. The catalytic chamber with the active sites is on the inside of the barrel. Has a gated structure, the ends of the cylinder being occluded by the N-termini of the alpha-subunits. Is capped by the proteasome-associated ATPase, ARC.

The protein localises to the cytoplasm. The enzyme catalyses Cleavage of peptide bonds with very broad specificity.. Its pathway is protein degradation; proteasomal Pup-dependent pathway. The formation of the proteasomal ATPase ARC-20S proteasome complex, likely via the docking of the C-termini of ARC into the intersubunit pockets in the alpha-rings, may trigger opening of the gate for substrate entry. Interconversion between the open-gate and close-gate conformations leads to a dynamic regulation of the 20S proteasome proteolysis activity. In terms of biological role, component of the proteasome core, a large protease complex with broad specificity involved in protein degradation. This chain is Proteasome subunit beta, found in Stackebrandtia nassauensis (strain DSM 44728 / CIP 108903 / NRRL B-16338 / NBRC 102104 / LLR-40K-21).